A 158-amino-acid chain; its full sequence is NAD(P)H-quinone oxidoreductase subunit J, chloroplastic (158 aa).

Belongs to the complex I 30 kDa subunit family. NDH is composed of at least 16 different subunits, 5 of which are encoded in the nucleus.

Its subcellular location is the plastid. The protein resides in the chloroplast thylakoid membrane. It carries out the reaction a plastoquinone + NADH + (n+1) H(+)(in) = a plastoquinol + NAD(+) + n H(+)(out). It catalyses the reaction a plastoquinone + NADPH + (n+1) H(+)(in) = a plastoquinol + NADP(+) + n H(+)(out). NDH shuttles electrons from NAD(P)H:plastoquinone, via FMN and iron-sulfur (Fe-S) centers, to quinones in the photosynthetic chain and possibly in a chloroplast respiratory chain. The immediate electron acceptor for the enzyme in this species is believed to be plastoquinone. Couples the redox reaction to proton translocation, and thus conserves the redox energy in a proton gradient. The protein is NAD(P)H-quinone oxidoreductase subunit J, chloroplastic of Ceratophyllum demersum (Rigid hornwort).